Consider the following 212-residue polypeptide: Thymidylate kinase (212 aa).

10-17 (GLEGAGKT) lines the ATP pocket.

The protein belongs to the thymidylate kinase family.

It carries out the reaction dTMP + ATP = dTDP + ADP. Its function is as follows. Phosphorylation of dTMP to form dTDP in both de novo and salvage pathways of dTTP synthesis. The polypeptide is Thymidylate kinase (Baumannia cicadellinicola subsp. Homalodisca coagulata).